A 785-amino-acid polypeptide reads, in one-letter code: MDFSRLHMYSPPQCVPENTGYTYALSSSYSSDALDFETEHKLDPVFDSPRMSRRSLRLATTACTLGDGEAVGADSGTSSAVSLKNRAARTTKQRRSTNKSAFSINHVSRQVTSSGVSHGGTVSLQDAVTRRPPVLDESWIREQTTVDHFWGLDDDGDLKGGNKAAIQGNGDVGAAAATAHNGFSCSNCSMLSERKDVLTAHPAAPGPVSRVYSRDRNQKCYFLLQILRRIGAVGQAVSRTAWSALWLAVVAPGKAASGVFWWLGIGWYQFVTLISWLNVFLLTRCLRNICKFLVLLIPLFLLLAGLSLRGQGNFFSFLPVLNWASMHRTQRVDDPQDVFKPTTSRLKQPLQGDSEAFPWHWMSGVEQQVASLSGQCHHHGENLRELTTLLQKLQARVDQMEGGAAGPSASVRDAVGQPPRETDFMAFHQEHEVRMSHLEDILGKLREKSEAIQKELEQTKQKTISAVGEQLLPTVEHLQLELDQLKSELSSWRHVKTGCETVDAVQERVDVQVREMVKLLFSEDQQGGSLEQLLQRFSSQFVSKGDLQTMLRDLQLQILRNVTHHVSVTKQLPTSEAVVSAVSEAGASGITEAQARAIVNSALKLYSQDKTGMVDFALESGGGSILSTRCSETYETKTALMSLFGIPLWYFSQSPRVVIQPDIYPGNCWAFKGSQGYLVVRLSMMIHPAAFTLEHIPKTLSPTGNISSAPKDFAVYGLENEYQEEGQLLGQFTYDQDGESLQMFQALKRPDDTAFQIVELRIFSNWGHPEYTCLYRFRVHGEPVK.

The segment at 1 to 138 is LMNA-binding; that stretch reads MDFSRLHMYS…TRRPPVLDES (138 aa). Residues 1 to 288 lie on the Nuclear side of the membrane; that stretch reads MDFSRLHMYS…VFLLTRCLRN (288 aa). 3 positions are modified to phosphoserine: Ser48, Ser100, and Ser138. Lys195 is covalently cross-linked (Glycyl lysine isopeptide (Lys-Gly) (interchain with G-Cter in SUMO2)). Positions 209 to 309 are SYNE2-binding; that stretch reads SRVYSRDRNQ…FLLLAGLSLR (101 aa). Residues 223–309 form an EMD-binding region; that stretch reads LLQILRRIGA…FLLLAGLSLR (87 aa). A helical transmembrane segment spans residues 289–308; sequence ICKFLVLLIPLFLLLAGLSL. Over 309-785 the chain is Perinuclear space; sequence RGQGNFFSFL…RFRVHGEPVK (477 aa). Residues Asp333 and Ser344 each carry the phosphoserine modification. Positions 428-495 form a coiled coil; sequence HQEHEVRMSH…KSELSSWRHV (68 aa). The sufficient for interaction with SYNE1 and SYNE2 stretch occupies residues 574-785; sequence TSEAVVSAVS…RFRVHGEPVK (212 aa). The region spanning 622-784 is the SUN domain; the sequence is GGSILSTRCS…YRFRVHGEPV (163 aa).

As to quaternary structure, core component of the LINC complex which is composed of inner nuclear membrane SUN domain-containing proteins coupled to outer nuclear membrane KASH domain-containing nesprins. SUN and KASH domain-containing proteins seem to bind each other promiscuously; however, differentially expression of LINC complex constituents is giving rise to specific assemblies. At least SUN1/2-containing core LINC complexes are proposed to be hexameric composed of three protomers of each KASH and SUN domain-containing protein. Interacts with KASH5 (via the last 22 amino acids); this interaction mediates KASH5 telomere localization by forming a SUN1:KASH5 LINC complex. May interact with SYNE3. Interacts with SYNE2 and SYNE1; probably forming respective LINC complexes. Interacts with A-type lamin with a strong preference for unprocessed A-type lamin compared with the mature protein. Interaction with lamins B1 and C is hardly detectable. Interacts with NAT10. Interacts with EMD and TSNAX. Associates with the nuclear pore complex (NPC). Interacts with CCDC79/TERB1; promoting the accumulation of the LINC complex complexes at the telomere-nuclear envelope attachment sites. Interacts (via KASH domain) with TMEM258. In terms of processing, the disulfide bond with KASH domain-containing nesprins is required for stability of the respective LINC complexes under tensile forces.

The protein resides in the nucleus inner membrane. Functionally, as a component of the LINC (LInker of Nucleoskeleton and Cytoskeleton) complex involved in the connection between the nuclear lamina and the cytoskeleton. The nucleocytoplasmic interactions established by the LINC complex play an important role in the transmission of mechanical forces across the nuclear envelope and in nuclear movement and positioning. Required for interkinetic nuclear migration (INM) and essential for nucleokinesis and centrosome-nucleus coupling during radial neuronal migration in the cerebral cortex and during glial migration. Involved in telomere attachment to nuclear envelope in the prophase of meiosis implicating a SUN1/2:KASH5 LINC complex in which SUN1 and SUN2 seem to act at least partial redundantly. Required for gametogenesis and involved in selective gene expression of coding and non-coding RNAs needed for gametogenesis. Helps to define the distribution of nuclear pore complexes (NPCs). Required for efficient localization of SYNE4 in the nuclear envelope. May be involved in nuclear remodeling during sperm head formation in spermatogenesis. May play a role in DNA repair by suppressing non-homologous end joining repair to facilitate the repair of DNA cross-links. The sequence is that of SUN domain-containing protein 1 from Homo sapiens (Human).